The primary structure comprises 378 residues: RIB43A-like with coiled-coils protein 1 (378 aa).

2 coiled-coil regions span residues 153–250 (RMQQ…VTSD) and 279–334 (EQRA…CAEF).

It belongs to the RIB43A family. In terms of assembly, microtubule inner protein component of sperm flagellar doublet microtubules.

Its subcellular location is the cytoplasm. It is found in the cytoskeleton. It localises to the flagellum axoneme. The sequence is that of RIB43A-like with coiled-coils protein 1 (Ribc1) from Rattus norvegicus (Rat).